Reading from the N-terminus, the 186-residue chain is Threonylcarbamoyl-AMP synthase (186 aa).

The YrdC-like domain occupies 2-186 (PNEFELAVAA…ARTGAIIRPS (185 aa)).

Belongs to the SUA5 family. TsaC subfamily.

Its subcellular location is the cytoplasm. It carries out the reaction L-threonine + hydrogencarbonate + ATP = L-threonylcarbamoyladenylate + diphosphate + H2O. Functionally, required for the formation of a threonylcarbamoyl group on adenosine at position 37 (t(6)A37) in tRNAs that read codons beginning with adenine. Catalyzes the conversion of L-threonine, HCO(3)(-)/CO(2) and ATP to give threonylcarbamoyl-AMP (TC-AMP) as the acyladenylate intermediate, with the release of diphosphate. The chain is Threonylcarbamoyl-AMP synthase from Aeromonas hydrophila subsp. hydrophila (strain ATCC 7966 / DSM 30187 / BCRC 13018 / CCUG 14551 / JCM 1027 / KCTC 2358 / NCIMB 9240 / NCTC 8049).